A 304-amino-acid chain; its full sequence is CD-NTase-associated protein 6 (304 aa).

75–80 provides a ligand contact to ATP; that stretch reads GTGKTS.

The protein belongs to the AAA ATPase family. Oligomerizes. Homohexamer. Forms a 1:1:6 CdnD:Cap7:Cap6 complex.

Its function is as follows. Regulates complex assembly in a CBASS antivirus system. CBASS (cyclic oligonucleotide-based antiphage signaling system) provides immunity against bacteriophage. The CD-NTase protein synthesizes cyclic nucleotides in response to infection; these serve as specific second messenger signals. The signals activate a diverse range of effectors, leading to bacterial cell death and thus abortive phage infection. A type III-C(AAA) CBASS system. In terms of biological role, prevents the CdnD:Cap7:Cap8 complex (also called CdnD:HORMA2:HORMA3) from synthesizing 2',3',3'-cyclic AMP-AMP-AMP (cAAA). Binds and disassembles an active CdnD:Cap7:Cap8 complex, inhibiting the complex's ability to synthesize cyclic nucleotide second messengers. An AAA+-ATPase remodeler, in the absence of foreign threat Cap6 probably maintains the Cap7 protein in an open, inactive state. Once activated (presumably by a bacteriophage protein) Cap7 binds to and activates its cognate CD-NTase (CdnD in this bacteria) to synthesize cAAA, a cyclic nucleotide second messenger. cAAA activates the NucC endonuclease which degrades all DNA in the infected cell, causing cell death and abortive phage infection. The protein is CD-NTase-associated protein 6 of Pseudomonas aeruginosa.